We begin with the raw amino-acid sequence, 194 residues long: HTH-type transcriptional regulator BetI (194 aa).

Residues 8 to 68 (EIRRAQLIDA…ATMRHVLRDL (61 aa)) form the HTH tetR-type domain. Residues 31–50 (TLASVAQRANISTGIVSHYF) constitute a DNA-binding region (H-T-H motif).

It participates in amine and polyamine biosynthesis; betaine biosynthesis via choline pathway [regulation]. Functionally, repressor involved in the biosynthesis of the osmoprotectant glycine betaine. It represses transcription of the choline transporter BetT and the genes of BetAB involved in the synthesis of glycine betaine. This is HTH-type transcriptional regulator BetI from Burkholderia cenocepacia (strain HI2424).